We begin with the raw amino-acid sequence, 352 residues long: Ion-translocating oxidoreductase complex subunit D (352 aa).

A run of 4 helical transmembrane segments spans residues 20–40 (IMLLVLLAAVPGIAAQLWFFG), 42–62 (GTLVQILLASVSALLAEALVL), 89–109 (IPPLAPWWMVVLGTVFAVIIA), and 123–143 (PAMIGYVVLLISFPVQMTSWL). An FMN phosphoryl threonine modification is found at threonine 187. Helical transmembrane passes span 214–234 (ILAGAGWQWVNLAWLAGGVWL), 242–262 (WHIPLSFLVTLALCATLGWLF), 267–287 (LASPQIHLLSGATMLGAFFIL), 301–321 (LIFGALAGLLVWLIRSFGGYP), and 322–342 (DGVAFAVLLANITVPLIDYYT).

Belongs to the NqrB/RnfD family. As to quaternary structure, the complex is composed of six subunits: RsxA, RsxB, RsxC, RsxD, RsxE and RsxG. The cofactor is FMN.

Its subcellular location is the cell inner membrane. In terms of biological role, part of a membrane-bound complex that couples electron transfer with translocation of ions across the membrane. Required to maintain the reduced state of SoxR. In Escherichia coli O17:K52:H18 (strain UMN026 / ExPEC), this protein is Ion-translocating oxidoreductase complex subunit D.